Consider the following 418-residue polypeptide: NADH-quinone oxidoreductase subunit H (418 aa).

9 helical membrane passes run 15–35, 83–103, 123–143, 164–184, 197–217, 262–282, 287–307, 321–341, and 349–369; these read LVLG…LVAI, FVYF…FAFI, LPVA…GIVL, VISY…YAGS, VWFV…MVGE, LATA…MWAG, WWPV…YFWL, GLGW…AAVI, and YAHW…ALVL. Residues 394-418 are disordered; sequence AAHRAGFHPGIPDTAAAGESAGGRE.

The protein belongs to the complex I subunit 1 family. As to quaternary structure, NDH-1 is composed of 14 different subunits. Subunits NuoA, H, J, K, L, M, N constitute the membrane sector of the complex.

The protein localises to the cell membrane. It carries out the reaction a quinone + NADH + 5 H(+)(in) = a quinol + NAD(+) + 4 H(+)(out). Functionally, NDH-1 shuttles electrons from NADH, via FMN and iron-sulfur (Fe-S) centers, to quinones in the respiratory chain. The immediate electron acceptor for the enzyme in this species is believed to be menaquinone. Couples the redox reaction to proton translocation (for every two electrons transferred, four hydrogen ions are translocated across the cytoplasmic membrane), and thus conserves the redox energy in a proton gradient. This subunit may bind ubiquinone. In Mycobacterium avium (strain 104), this protein is NADH-quinone oxidoreductase subunit H.